The sequence spans 1227 residues: Splicing factor 3B subunit 3 (1227 aa).

The protein belongs to the RSE1 family. Identified in the spliceosome A complex; remains associated with the spliceosome throughout the splicing process. Component of the spliceosome B complex. Identified in the spliceosome C complex. Identified in the spliceosome E complex. Component of the U11/U12 snRNPs that are part of the U12-type spliceosome. Component of splicing factor SF3B complex. Identified in the SAGA transcription regulatory histone acetylation (HAT) complex; the interaction is RNA-independent.

Its subcellular location is the nucleus. Its function is as follows. Involved in pre-mRNA splicing as a component of the splicing factor SF3B complex, a constituent of the spliceosome. SF3B complex is required for 'A' complex assembly formed by the stable binding of U2 snRNP to the branchpoint sequence (BPS) in pre-mRNA. Sequence independent binding of SF3A/SF3B complex upstream of the branch site is essential, it may anchor U2 snRNP to the pre-mRNA. May also be involved in the assembly of the 'E' complex. Also belongs to the minor U12-dependent spliceosome, which is involved in the splicing of rare class of nuclear pre-mRNA intron. This is Splicing factor 3B subunit 3 from Drosophila melanogaster (Fruit fly).